A 1836-amino-acid polypeptide reads, in one-letter code: Sodium channel protein type 4 subunit alpha (1836 aa).

Residues Met1–Ala131 lie on the Cytoplasmic side of the membrane. Residues Leu39 to Ala60 are compositionally biased toward basic and acidic residues. The disordered stretch occupies residues Leu39–Asn63. An I repeat occupies Leu113 to Asn454. A helical transmembrane segment spans residues Leu132 to Met150. Residues Ser151–Ser157 are Extracellular-facing. The helical transmembrane segment at Lys158 to Ala178 threads the bilayer. Over Arg179–Pro192 the chain is Cytoplasmic. The helical transmembrane segment at Trp193–Val210 threads the bilayer. Topologically, residues Asp211–Ser216 are extracellular. A glycan (N-linked (GlcNAc...) asparagine) is linked at Asn214. The chain crosses the membrane as a helical span at residues Ala217–Ile233. At Pro234 to Asp252 the chain is on the cytoplasmic side. Residues Val253–Phe272 form a helical membrane-spanning segment. Residues Met273 to Thr391 are Extracellular-facing. Cys280 and Cys360 are disulfide-bonded. N-linked (GlcNAc...) asparagine glycosylation is found at Asn288, Asn291, Asn297, Asn303, Asn315, Asn321, Asn333, and Asn362. Cys369 and Cys375 are oxidised to a cystine. The pore-forming intramembrane region spans Phe392–Leu416. Residues Arg417–Tyr423 lie on the Extracellular side of the membrane. A helical membrane pass occupies residues Met424–Ala444. At Val445 to Pro578 the chain is on the cytoplasmic side. The tract at residues Gly493–Ile530 is disordered. The span at Ser509–Ser528 shows a compositional bias: polar residues. One copy of the II repeat lies at Cys560–Gly832. The chain crosses the membrane as a helical span at residues Phe579–Met597. Over Glu598–Asn608 the chain is Extracellular. Residues Val609 to Lys628 traverse the membrane as a helical segment. Residues Leu629 to Trp642 are Cytoplasmic-facing. A helical membrane pass occupies residues Asn643–Val662. Topologically, residues Gln663–Gly664 are extracellular. The helical transmembrane segment at Leu665 to Ser682 threads the bilayer. Residues Trp683–Gly698 lie on the Cytoplasmic side of the membrane. Residues Ala699–Val717 form a helical membrane-spanning segment. Topologically, residues Gly718–Asp746 are extracellular. Cysteines 731 and 737 form a disulfide. Positions Phe747–Trp767 form an intramembrane region, pore-forming. Over Asp768–Cys778 the chain is Extracellular. The cysteines at positions 769 and 778 are disulfide-linked. The helical transmembrane segment at Leu779 to Phe797 threads the bilayer. The Cytoplasmic portion of the chain corresponds to Leu798–Trp1032. 2 disordered regions span residues Gly863–Glu885 and Glu930–Glu992. Over residues Glu876–Glu885 the composition is skewed to basic and acidic residues. Composition is skewed to acidic residues over residues Glu930–Pro947 and Glu975–Glu992. The stretch at Arg1013–Leu1326 is one III repeat. Residues Phe1033–Phe1050 form a helical membrane-spanning segment. Topologically, residues Glu1051–Thr1063 are extracellular. A helical membrane pass occupies residues Ile1064–Leu1082. The Cytoplasmic segment spans residues Lys1083–Ala1096. Residues Trp1097 to Asn1115 traverse the membrane as a helical segment. The Extracellular segment spans residues Trp1116–Gly1123. Residues Pro1124–Arg1142 traverse the membrane as a helical segment. The Cytoplasmic segment spans residues Phe1143–Ser1159. The helical transmembrane segment at Ile1160–Val1179 threads the bilayer. Residues Asn1180–Val1230 are Extracellular-facing. Cysteines 1189 and 1209 form a disulfide. N-linked (GlcNAc...) asparagine glycans are attached at residues Asn1191 and Asn1205. The segment at residues Gly1231–Ala1252 is an intramembrane region (pore-forming). Residues Ala1253–Leu1269 are Extracellular-facing. A helical transmembrane segment spans residues Tyr1270–Ile1291. Over Gly1292–Ala1354 the chain is Cytoplasmic. The important for rapid channel inactivation stretch occupies residues Ile1310–Met1312. One copy of the IV repeat lies at Ile1335 to Gln1633. The helical transmembrane segment at Phe1355–Val1372 threads the bilayer. Residues Glu1373–Asp1383 are Extracellular-facing. The helical transmembrane segment at Ile1384–Leu1402 threads the bilayer. Residues Lys1403–Val1414 lie on the Cytoplasmic side of the membrane. The helical transmembrane segment at Gly1415 to Ala1432 threads the bilayer. Over Leu1433–Thr1445 the chain is Extracellular. A helical transmembrane segment spans residues Leu1446–Ile1462. Topologically, residues Arg1463 to Ala1481 are cytoplasmic. The chain crosses the membrane as a helical span at residues Leu1482–Phe1499. Topologically, residues Gly1500–Thr1521 are extracellular. An intramembrane region (pore-forming) is located at residues Phe1522–Pro1544. The Extracellular segment spans residues Ile1545–Gly1574. Cys1553 and Cys1568 are oxidised to a cystine. Residues Ile1575–Ile1597 form a helical membrane-spanning segment. The Cytoplasmic segment spans residues Leu1598–Val1836. The region spanning Glu1727–His1756 is the IQ domain. Residues Lys1778–Val1836 are disordered.

Belongs to the sodium channel (TC 1.A.1.10) family. Nav1.4/SCN4A subfamily. As to quaternary structure, the Nav1.4 voltage-gated sodium channel consists of an ion-conducting alpha subunit SCN4A which is functional on its own and a regulatory beta subunit SCN1B. SCN1B strongly enhances the presence of SCN4A at the cell surface. SCN1B is also required for rapid channel inactivation and recovery after inactivation. It prevents the decrease of channel activity in response to repetitive, high-frequency depolarizations. Interacts with the syntrophins SNTA1, SNTB1 and SNTB2 (via PDZ domain); probably links SCN4A to the actin cytoskeleton and the extracellular matrix via the dystrophin-associated protein complex and regulates its localization in muscle cells. Interacts with TMEM233; probable regulator of the channel.

Its subcellular location is the cell membrane. The enzyme catalyses Na(+)(in) = Na(+)(out). Its activity is regulated as follows. The channel is inhibited by tetrodotoxin and saxitoxin. Inhibited by the conotoxin GVIIJ. Its function is as follows. Pore-forming subunit of Nav1.4, a voltage-gated sodium (Nav) channel that directly mediates the depolarizing phase of action potentials in excitable membranes. Navs, also called VGSCs (voltage-gated sodium channels) or VDSCs (voltage-dependent sodium channels), operate by switching between closed and open conformations depending on the voltage difference across the membrane. In the open conformation they allow Na(+) ions to selectively pass through the pore, along their electrochemical gradient. The influx of Na+ ions provokes membrane depolarization, initiating the propagation of electrical signals throughout cells and tissues. Highly expressed in skeletal muscles, Nav1.4 generates the action potential crucial for muscle contraction. The polypeptide is Sodium channel protein type 4 subunit alpha (Homo sapiens (Human)).